We begin with the raw amino-acid sequence, 180 residues long: Regulator of G-protein signaling 8 (180 aa).

At Ser26 the chain carries Phosphoserine. An RGS domain is found at 56 to 171 (SFDVLLSHKY…FLRSKMYLDL (116 aa)).

As to quaternary structure, interacts with GNAO1 and GNAI3.

It localises to the cell membrane. It is found in the membrane. The protein resides in the perikaryon. The protein localises to the cell projection. Its subcellular location is the dendrite. It localises to the nucleus. In terms of biological role, regulates G protein-coupled receptor signaling cascades, including signaling via muscarinic acetylcholine receptor CHRM2 and dopamine receptor DRD2. Inhibits signal transduction by increasing the GTPase activity of G protein alpha subunits, thereby driving them into their inactive GDP-bound form. Modulates the activity of potassium channels that are activated in response to DRD2 and CHRM2 signaling. The protein is Regulator of G-protein signaling 8 (Rgs8) of Mus musculus (Mouse).